A 618-amino-acid chain; its full sequence is Serine/threonine-protein kinase pkn1 (618 aa).

The region spanning 15–381 (YKILCYLRKG…KEEVKPQPLF (367 aa)) is the Protein kinase domain. Residues 21 to 29 (LRKGLWCQD) and Lys44 each bind ATP.

It belongs to the protein kinase superfamily. Ser/Thr protein kinase family. In terms of processing, autophosphorylated on serine and threonine residues.

The enzyme catalyses L-seryl-[protein] + ATP = O-phospho-L-seryl-[protein] + ADP + H(+). It catalyses the reaction L-threonyl-[protein] + ATP = O-phospho-L-threonyl-[protein] + ADP + H(+). Its function is as follows. Together with the serine/threonine kinase PknD, may play a role in the specific interactions with host proteins during intracellular growth. The chain is Serine/threonine-protein kinase pkn1 (pkn1) from Chlamydia caviae (strain ATCC VR-813 / DSM 19441 / 03DC25 / GPIC) (Chlamydophila caviae).